The chain runs to 278 residues: MAVSSLAGLGLRREMLAEFSQSVPAQIDFFEVAPENWMALGGKYGKQFRALTERHAFFCHGLSLSIGSSAPLDIDFIKGIKAFLDLHGIAVYSEHLSYCSGSGHLYDLMPMPFTPEAVRHIAGRVKQVEDIIERPLILENISFYAAPGAQMTELEFVLAVLEEADCQLLLDVNNIYVNSINHNYDAAAYLAAMPTERIRYLHVAGHYVEAPDLIVDTHGADIVDPVWQLLCDCYALHGPLPTLLERDFNIPPIGELLQEIDRIRDYQAAAIRTSRRAG.

This sequence belongs to the UPF0276 family.

This is UPF0276 protein Sama_1305 from Shewanella amazonensis (strain ATCC BAA-1098 / SB2B).